Reading from the N-terminus, the 335-residue chain is Trans-3-hydroxy-L-proline dehydratase (335 aa).

Cys-91 serves as the catalytic Proton acceptor. Residues 92-93, Asp-251, and 256-257 contribute to the substrate site; these read GH and GS.

It belongs to the proline racemase family.

It carries out the reaction trans-3-hydroxy-L-proline = 1-pyrroline-2-carboxylate + H2O. In terms of biological role, catalyzes the dehydration of trans-3-hydroxy-L-proline (t3LHyp) to Delta(1)-pyrroline-2-carboxylate (Pyr2C). Is likely involved in a degradation pathway that converts t3LHyp to L-proline. Displays neither trans-4-hydroxy-L-proline (t4LHyp) epimerase nor proline racemase activity. This chain is Trans-3-hydroxy-L-proline dehydratase, found in Burkholderia ambifaria (strain ATCC BAA-244 / DSM 16087 / CCUG 44356 / LMG 19182 / AMMD) (Burkholderia cepacia (strain AMMD)).